The sequence spans 596 residues: Signal peptide peptidase-like 2B (596 aa).

The first 21 residues, 1-21 (MAARWAQFLLFSLLSLPQVYC), serve as a signal peptide directing secretion. Residues 22–170 (EYGMVHVLSE…APNEPVLDYN (149 aa)) lie on the Lumenal side of the membrane. One can recognise a PA domain in the interval 53-147 (HDLGKASLLQ…LLSYSDMLDI (95 aa)). Asparagine 93 carries N-linked (GlcNAc...) asparagine glycosylation. The chain crosses the membrane as a helical span at residues 171 to 191 (MVIIFVMAVGTVAIGGYWAGS). Topologically, residues 192–219 (RDVKERYMKHKRDDGAEKHEDETVDVTP) are cytoplasmic. Residues 220-240 (IMICVFVVMCCSMLVLLYFFY) traverse the membrane as a helical segment. At 241–242 (DH) the chain is on the lumenal side. Residues 243 to 263 (LVYVIIGIFCLAASIGLYSCL) form a helical membrane-spanning segment. Residues 264–289 (SPFVRRFPLGKCRIPDNNLPYFHKRP) lie on the Cytoplasmic side of the membrane. Residues 290-310 (QVRILLLAVFCISVSVVWGVF) traverse the membrane as a helical segment. Residues 311–315 (RNEDQ) are Lumenal-facing. A helical membrane pass occupies residues 316-336 (WAWVLQDALGIAFCLYMLKTI). At 337–344 (RLPTFKGC) the chain is on the cytoplasmic side. The helical transmembrane segment at 345–365 (TLLLLVLFVYDVFFVFITPFL) threads the bilayer. Residue aspartate 355 is part of the active site. The Lumenal portion of the chain corresponds to 366-408 (TKTGESIMVEVAAGPSDSATHEKLPMVLKVPRLNSSPLALCDR). Residues 409–429 (PFSLLGFGDILVPGLLVAYCH) traverse the membrane as a helical segment. Residue aspartate 417 is part of the active site. The Cytoplasmic segment spans residues 430 to 441 (RFDIQVQSSRVY). The helical transmembrane segment at 442–462 (FVACTIAYGIGLLVTFVALAL) threads the bilayer. Residues 463-466 (MQMG) are Lumenal-facing. The helical transmembrane segment at 467–487 (QPALLYLVPCTLITSFSVALW) threads the bilayer. The PAL motif lies at 468–470 (PAL). Topologically, residues 488–596 (RKELAMFWTG…SLNLEQKQLE (109 aa)) are cytoplasmic. The disordered stretch occupies residues 543–596 (KELHSPTLAAEEPADNDTKTEQSEVSIAQSEEAAGHNKDDLESKSLNLEQKQLE). A compositionally biased stretch (basic and acidic residues) spans 575–585 (AAGHNKDDLES). Positions 586 to 596 (KSLNLEQKQLE) are enriched in polar residues.

It belongs to the peptidase A22B family.

The protein localises to the cell membrane. It localises to the golgi apparatus membrane. The protein resides in the lysosome membrane. It is found in the endosome membrane. Its subcellular location is the membrane. Functionally, intramembrane-cleaving aspartic protease (I-CLiP) that cleaves type II membrane signal peptides in the hydrophobic plane of the membrane. The protein is Signal peptide peptidase-like 2B of Gallus gallus (Chicken).